Reading from the N-terminus, the 642-residue chain is Stress-activated map kinase-interacting protein 1 homolog (642 aa).

The 126-residue stretch at 189–314 folds into the CRIM domain; that stretch reads ARIREVIGYC…EREPLFQGLL (126 aa). The segment at 603–642 is disordered; that stretch reads IVSPSSDAPSRSSNGKNGGKFRKMSSLMASVMGRRKSDSK. A compositionally biased stretch (low complexity) spans 605–615; sequence SPSSDAPSRSS.

This sequence belongs to the SIN1 family. As to quaternary structure, component of the target of rapamycin complex 2 (TORC2).

Functionally, component of the target of rapamycin complex 2 (TORC2), which transduces signals from growth factors to pathways involved in proliferation, cytoskeletal organization and anabolic output. In response to growth factors, TORC2 phosphorylates and activates AGC protein kinase family members, such as Akt1. Within the TORC2 complex, sinh-1 acts as a substrate adapter which recognizes and binds AGC protein kinase family members for phosphorylation by mTor. In Caenorhabditis elegans, this protein is Stress-activated map kinase-interacting protein 1 homolog (sinh-1).